A 425-amino-acid polypeptide reads, in one-letter code: Tol-Pal system protein TolB (425 aa).

The N-terminal stretch at 1–25 (MTRKHILSFALMTALGMTVTSTAFA) is a signal peptide.

The protein belongs to the TolB family. In terms of assembly, the Tol-Pal system is composed of five core proteins: the inner membrane proteins TolA, TolQ and TolR, the periplasmic protein TolB and the outer membrane protein Pal. They form a network linking the inner and outer membranes and the peptidoglycan layer.

The protein localises to the periplasm. In terms of biological role, part of the Tol-Pal system, which plays a role in outer membrane invagination during cell division and is important for maintaining outer membrane integrity. The sequence is that of Tol-Pal system protein TolB from Acinetobacter baylyi (strain ATCC 33305 / BD413 / ADP1).